Reading from the N-terminus, the 692-residue chain is Phenoloxidase subunit 2 (692 aa).

A propeptide spanning residues 1–97 (MTDRVKSLQL…PRHQEMATEV (97 aa)) is cleaved from the precursor. His213, His217, and His243 together coordinate Cu cation. N-linked (GlcNAc...) asparagine glycans are attached at residues Asn256, Asn295, and Asn309. The Proton acceptor role is filled by Glu351. His366, His370, and His406 together coordinate Cu cation. Asn494 carries an N-linked (GlcNAc...) asparagine glycan. Cystine bridges form between Cys583-Cys628 and Cys585-Cys635.

This sequence belongs to the tyrosinase family. Heterodimer. Cu(2+) serves as cofactor.

Its subcellular location is the secreted. It catalyses the reaction L-tyrosine + O2 = L-dopaquinone + H2O. The enzyme catalyses 2 L-dopa + O2 = 2 L-dopaquinone + 2 H2O. In terms of biological role, copper-containing oxidase that functions in the formation of pigments such as melanins and other polyphenolic compounds. Catalyzes the rate-limiting conversions of tyrosine to DOPA, DOPA to DOPA-quinone and possibly 5,6 dihydroxyindole to indole-5'6 quinone. Binds to the surface of hemocytes and is involved in hemocyte melanization. Binds the A.niger cell wall component alpha-1,3-glucan, a fungal pathogen-associated molecular pattern (PAMP) that activates the host immune response. The protein is Phenoloxidase subunit 2 of Galleria mellonella (Greater wax moth).